Reading from the N-terminus, the 168-residue chain is uncharacterized protein (168 aa).

3 disordered regions span residues 1-35 (MGSS…KKLD), 48-97 (KVKK…DKGN), and 126-168 (ASIT…GLGM). The stretch at 29 to 95 (KEKKKLDEKE…KNSLSRSQDK (67 aa)) forms a coiled coil. Residues 68–85 (LAEDPMVKNVAENDHDQM) are compositionally biased toward basic and acidic residues. Over residues 126–139 (ASITESSPSAQSNK) the composition is skewed to polar residues. Basic and acidic residues predominate over residues 140–150 (TNDKQREKELE). A compositionally biased stretch (basic residues) spans 157 to 168 (VLHKGTKKGLGM).

This is an uncharacterized protein from Schizosaccharomyces pombe (strain 972 / ATCC 24843) (Fission yeast).